A 461-amino-acid polypeptide reads, in one-letter code: Cysteine--tRNA ligase (461 aa).

C28 contributes to the Zn(2+) binding site. Residues 30–40 (ITVYDLCHIGH) carry the 'HIGH' region motif. Zn(2+) is bound by residues C209, H234, and E238. The 'KMSKS' region signature appears at 266–270 (KMSKS). K269 is an ATP binding site.

It belongs to the class-I aminoacyl-tRNA synthetase family. Monomer. It depends on Zn(2+) as a cofactor.

The protein localises to the cytoplasm. It carries out the reaction tRNA(Cys) + L-cysteine + ATP = L-cysteinyl-tRNA(Cys) + AMP + diphosphate. In Shigella boydii serotype 18 (strain CDC 3083-94 / BS512), this protein is Cysteine--tRNA ligase.